Here is a 591-residue protein sequence, read N- to C-terminus: Serine/threonine-protein phosphatase PP2A 65 kDa regulatory subunit (591 aa).

A2 bears the N-acetylalanine mark. 15 HEAT repeats span residues 10–48 (DSLY…GEER), 49–86 (TRSE…GGPE), 87–125 (FAMY…SAQD), 126–163 (LEIH…VTQP), 164–202 (VKAE…ETEY), 203–241 (LKSD…PQDD), 242–280 (VEHL…GPEI), 281–323 (TRVD…QVQI), 324–362 (ILSS…GAYQ), 363–401 (TVEQ…GIQQ), 402–440 (LSQS…GQEF), 441–479 (FDQK…GAPW), 480–518 (AEQA…GTDI), 519–557 (TTKL…EASV), and 558–591 (IDAQ…IAAA).

The protein belongs to the phosphatase 2A regulatory subunit A family. As to quaternary structure, PP2A exists in several trimeric forms, all of which consist of a core composed of a catalytic subunit associated with a 65 kDa regulatory subunit (PR65) (subunit A). The core complex associates with a third, variable subunit (subunit B), which confers distinct properties to the holoenzyme. Interacts with the inorganic phosphate transporter PXo (CG10483). Component of the Integrator-PP2A (INTAC) complex, composed of the Integrator core complex and protein phosphatase 2A subunits mts/PP2A and Pp2A-29B. As to expression, expression varies in tissues throughout development. Highly distributed expression in early embryos. In late embryonal development, found at high levels in nervous system and gonads. In third instar larvae, found in brain, imaginal disks and salivary glands.

The protein localises to the nucleus. In terms of biological role, the PR65 subunit of protein phosphatase 2A serves as a scaffolding molecule to coordinate the assembly of the catalytic subunit and a variable regulatory B subunit. Key mediator of a quality checkpoint during transcription elongation as part of the Integrator-PP2A (INTAC) complex. The INTAC complex drives premature transcription termination of transcripts that are unfavorably configured for transcriptional elongation: within the INTAC complex, acts as a scaffolding subunit for mts/PP2A, which catalyzes dephosphorylation of the C-terminal domain (CTD) of Pol II subunit POLR2A/RPB1 and Spt5, thereby preventing transcriptional elongation. The chain is Serine/threonine-protein phosphatase PP2A 65 kDa regulatory subunit (Pp2A-29B) from Drosophila melanogaster (Fruit fly).